A 574-amino-acid polypeptide reads, in one-letter code: MPASLLRFLALAGTAVGLTTNHNHSPSCRVLPGDAAWPSSRDWAKLNKTLNGHLIATVPQASVCHKSPFGQYDAQACEELKSSWDISTITHVNAPGDVLSQNFQNYSCVPFTDPSQPCQLGNYPSYVVNVTGAADVQAALKFAQKHNVRIVIKNTGHDYLGKSTGKGALSLWMHNLKSTKFIKNYKAPYYKGPAAKLGAGVEGFEAYAMANSTGHRIVGGTCPTVGIVGGYTQGGGHSILSSSYGVAADNVLEWEVVTADGRHLVATPTRNSDLYWALSGGGGGTFAVVLSMTARLHRDGIVGGTLLGFNDSAVGNEVYWEAVAAFHALLPDFLDGGNSFTYSVGNNSLTAYGTMPGADRDAVDRLLRPFLDDLASRGITPVVQPRVSTNYYDHFFTYLGPAPYGNAAYFPFTNSRIIPRSLVTDPKSNAVVTDLFRNISQVPAFSPFYCDSFSVADKPHPANSLHPAWRTGMLLCAPAGSWDWDASPEEMAARDRYAAETLQPMMDAATPGGSVYLNEANHLYANWKESFYGDNYARLLRVKKKYDPDSVFYVKTGVGSEVWDVDATGRLCRA.

Residues 1–17 (MPASLLRFLALAGTAVG) form the signal peptide. 4 disulfides stabilise this stretch: C28/C572, C64/C77, C108/C118, and C450/C476. The N-linked (GlcNAc...) asparagine glycan is linked to N47. A glycan (N-linked (GlcNAc...) asparagine) is linked at N105. Residues 120–299 (LGNYPSYVVN…LSMTARLHRD (180 aa)) form the FAD-binding PCMH-type domain. Residues N129, N211, N310, N346, and N438 are each glycosylated (N-linked (GlcNAc...) asparagine). The 6-(S-cysteinyl)-8alpha-(pros-histidyl)-FAD (His-Cys) cross-link spans 157–222 (HDYLGKSTGK…TGHRIVGGTC (66 aa)).

Belongs to the oxygen-dependent FAD-linked oxidoreductase family. It depends on FAD as a cofactor. In terms of processing, the FAD cofactor is bound via a bicovalent 6-S-cysteinyl, 8alpha-N1-histidyl FAD linkage.

The protein localises to the secreted. Its function is as follows. Probably oxidoreductase that, when reduced, rapidly reacts with molecular oxygen, a hallmark of flavoprotein oxidases. A large panel of alcohols, including carbohydrates, steroids and secondary alcohols were tested as potential substrates, but none has been identified so far. This is VAO-type flavoprotein oxidase VAO615 from Thermothelomyces thermophilus (strain ATCC 42464 / BCRC 31852 / DSM 1799) (Sporotrichum thermophile).